The sequence spans 558 residues: Dihydroxy-acid dehydratase (558 aa).

[2Fe-2S] cluster is bound at residue cysteine 51. Mg(2+) is bound at residue aspartate 83. Cysteine 124 lines the [2Fe-2S] cluster pocket. Aspartate 125 and lysine 126 together coordinate Mg(2+). An N6-carboxylysine modification is found at lysine 126. Cysteine 196 contributes to the [2Fe-2S] cluster binding site. A Mg(2+)-binding site is contributed by glutamate 447. Catalysis depends on serine 473, which acts as the Proton acceptor.

Belongs to the IlvD/Edd family. In terms of assembly, homodimer. [2Fe-2S] cluster serves as cofactor. The cofactor is Mg(2+).

It carries out the reaction (2R)-2,3-dihydroxy-3-methylbutanoate = 3-methyl-2-oxobutanoate + H2O. The enzyme catalyses (2R,3R)-2,3-dihydroxy-3-methylpentanoate = (S)-3-methyl-2-oxopentanoate + H2O. It participates in amino-acid biosynthesis; L-isoleucine biosynthesis; L-isoleucine from 2-oxobutanoate: step 3/4. Its pathway is amino-acid biosynthesis; L-valine biosynthesis; L-valine from pyruvate: step 3/4. Functionally, functions in the biosynthesis of branched-chain amino acids. Catalyzes the dehydration of (2R,3R)-2,3-dihydroxy-3-methylpentanoate (2,3-dihydroxy-3-methylvalerate) into 2-oxo-3-methylpentanoate (2-oxo-3-methylvalerate) and of (2R)-2,3-dihydroxy-3-methylbutanoate (2,3-dihydroxyisovalerate) into 2-oxo-3-methylbutanoate (2-oxoisovalerate), the penultimate precursor to L-isoleucine and L-valine, respectively. The polypeptide is Dihydroxy-acid dehydratase (Flavobacterium psychrophilum (strain ATCC 49511 / DSM 21280 / CIP 103535 / JIP02/86)).